The chain runs to 144 residues: D-aminoacyl-tRNA deacylase (144 aa).

A Gly-cisPro motif, important for rejection of L-amino acids motif is present at residues 136-137; that stretch reads GP.

The protein belongs to the DTD family. As to quaternary structure, homodimer.

It localises to the cytoplasm. It catalyses the reaction glycyl-tRNA(Ala) + H2O = tRNA(Ala) + glycine + H(+). The enzyme catalyses a D-aminoacyl-tRNA + H2O = a tRNA + a D-alpha-amino acid + H(+). In terms of biological role, an aminoacyl-tRNA editing enzyme that deacylates mischarged D-aminoacyl-tRNAs. Also deacylates mischarged glycyl-tRNA(Ala), protecting cells against glycine mischarging by AlaRS. Acts via tRNA-based rather than protein-based catalysis; rejects L-amino acids rather than detecting D-amino acids in the active site. By recycling D-aminoacyl-tRNA to D-amino acids and free tRNA molecules, this enzyme counteracts the toxicity associated with the formation of D-aminoacyl-tRNA entities in vivo and helps enforce protein L-homochirality. This chain is D-aminoacyl-tRNA deacylase, found in Haemophilus influenzae (strain PittEE).